A 564-amino-acid chain; its full sequence is Arginine--tRNA ligase (564 aa).

Positions 122 to 132 (PNIAKPFSIGH) match the 'HIGH' region motif.

This sequence belongs to the class-I aminoacyl-tRNA synthetase family. Monomer.

The protein resides in the cytoplasm. The catalysed reaction is tRNA(Arg) + L-arginine + ATP = L-arginyl-tRNA(Arg) + AMP + diphosphate. The polypeptide is Arginine--tRNA ligase (Lactococcus lactis subsp. lactis (strain IL1403) (Streptococcus lactis)).